A 162-amino-acid chain; its full sequence is ATP synthase subunit b 1 (162 aa).

Residues 1 to 21 (MLLTAEFWVAVAFVAFLVIVW) form a helical membrane-spanning segment.

The protein belongs to the ATPase B chain family. As to quaternary structure, F-type ATPases have 2 components, F(1) - the catalytic core - and F(0) - the membrane proton channel. F(1) has five subunits: alpha(3), beta(3), gamma(1), delta(1), epsilon(1). F(0) has three main subunits: a(1), b(2) and c(10-14). The alpha and beta chains form an alternating ring which encloses part of the gamma chain. F(1) is attached to F(0) by a central stalk formed by the gamma and epsilon chains, while a peripheral stalk is formed by the delta and b chains.

The protein localises to the cell inner membrane. Functionally, f(1)F(0) ATP synthase produces ATP from ADP in the presence of a proton or sodium gradient. F-type ATPases consist of two structural domains, F(1) containing the extramembraneous catalytic core and F(0) containing the membrane proton channel, linked together by a central stalk and a peripheral stalk. During catalysis, ATP synthesis in the catalytic domain of F(1) is coupled via a rotary mechanism of the central stalk subunits to proton translocation. Its function is as follows. Component of the F(0) channel, it forms part of the peripheral stalk, linking F(1) to F(0). This Methylorubrum populi (strain ATCC BAA-705 / NCIMB 13946 / BJ001) (Methylobacterium populi) protein is ATP synthase subunit b 1.